Here is a 57-residue protein sequence, read N- to C-terminus: Conotoxin reg3.17 (57 aa).

The signal sequence occupies residues 1 to 16; the sequence is TICLLLFPLTVVPLDG. Positions 17–44 are excised as a propeptide; it reads DQPAHQPAVRKHNIKSAVQLRQWDEEQQ. Intrachain disulfides connect Cys45–Cys57, Cys46–Cys53, and Cys50–Cys56.

This sequence belongs to the conotoxin M superfamily. Expressed by the venom duct.

It is found in the secreted. This is Conotoxin reg3.17 from Conus regius (Crown cone).